A 295-amino-acid polypeptide reads, in one-letter code: Probable intramembrane protease C25B8.17 (295 aa).

A helical membrane pass occupies residues 1–21 (MEGVILASSALFTVYIGAKWS). Topologically, residues 22 to 35 (AQEEEPEEKQLINK) are cytoplasmic. Residues 36-56 (RLAVLFPIFGGVTLVLMYLAL) traverse the membrane as a helical segment. Topologically, residues 57–63 (RYLSKEY) are lumenal. Residues 64–84 (IQLILQGYASLASIICFVRSF) traverse the membrane as a helical segment. The Cytoplasmic segment spans residues 85–89 (NPKTT). The chain crosses the membrane as a helical span at residues 90-106 (FGKITATMSSIAIALFY). Over 107 to 111 (FKTKH) the chain is Lumenal. Residues 112-130 (WMASNILAWALAANSISIM) form a helical membrane-spanning segment. The Cytoplasmic portion of the chain corresponds to 131-139 (RIDSYNTGA). The helical transmembrane segment at 140-160 (LLLGALFFYDIYFVFGTEVMV) threads the bilayer. Residue D149 is part of the active site. At 161–183 (TVATGIDIPAKYVLPQFKNPTRL) the chain is on the lumenal side. Residues 184–204 (SMLGLGDIVMPGLMLALMYRF) form a helical membrane-spanning segment. Residue D190 is part of the active site. The Cytoplasmic portion of the chain corresponds to 205-221 (DLHYYINSTSQPKKHST). Residues 222–244 (YFRNTFIAYGLGLGVTNFALYYF) traverse the membrane as a helical segment. Residues 245–249 (KAAQP) lie on the Lumenal side of the membrane. The PAL motif lies at 249 to 251 (PAL). A helical membrane pass occupies residues 250–268 (ALLYLSPACIVAPLLTAWY). Over 269–295 (RDELKTLFSFRSETEDETDEQDKCKST) the chain is Cytoplasmic.

Belongs to the peptidase A22B family.

The protein localises to the endoplasmic reticulum membrane. The protein resides in the golgi apparatus membrane. This Schizosaccharomyces pombe (strain 972 / ATCC 24843) (Fission yeast) protein is Probable intramembrane protease C25B8.17.